A 266-amino-acid polypeptide reads, in one-letter code: Decarboxylase tropJ (266 aa).

The active-site Proton acceptor is glutamate 80. Glutamate 80, histidine 99, histidine 101, and histidine 180 together coordinate Zn(2+).

This sequence belongs to the aldolase class II family. The cofactor is Zn(2+).

Its pathway is secondary metabolite biosynthesis. Decarboxylase; part of the gene cluster that mediates the biosynthesis of the tropolone class of fungal maleic anhydrides. The pathway begins with the synthesis of 3-methylorcinaldehyde by the non-reducing polyketide synthase (PKS) tropA. 3-methylorcinaldehyde is the substrate for the FAD-dependent monooxygenase tropB to yield a dearomatized hydroxycyclohexadione. The 2-oxoglutarate-dependent dioxygenase tropC then performs the oxidative ring expansion to provide the first tropolone metabolite stipitaldehyde. Trop D converts stipitaldehyde into stipitacetal which is in turn converted to stipitalide by the short-chain dehydrogenase/reductase tropE. The next steps involve tropF, tropG, tropH, tropI and tropJ to form successive tropolone maleic anhydrides including stipitaldehydic, stipitatonic and stipitatic acids. The chain is Decarboxylase tropJ from Talaromyces stipitatus (strain ATCC 10500 / CBS 375.48 / QM 6759 / NRRL 1006) (Penicillium stipitatum).